The primary structure comprises 210 residues: Imidazoleglycerol-phosphate dehydratase (210 aa).

The protein belongs to the imidazoleglycerol-phosphate dehydratase family.

It localises to the cytoplasm. It catalyses the reaction D-erythro-1-(imidazol-4-yl)glycerol 3-phosphate = 3-(imidazol-4-yl)-2-oxopropyl phosphate + H2O. Its pathway is amino-acid biosynthesis; L-histidine biosynthesis; L-histidine from 5-phospho-alpha-D-ribose 1-diphosphate: step 6/9. The polypeptide is Imidazoleglycerol-phosphate dehydratase (Mycobacterium marinum (strain ATCC BAA-535 / M)).